Reading from the N-terminus, the 179-residue chain is Large ribosomal subunit protein uL5 (179 aa).

This sequence belongs to the universal ribosomal protein uL5 family. Part of the 50S ribosomal subunit; part of the 5S rRNA/L5/L18/L25 subcomplex. Contacts the 5S rRNA and the P site tRNA. Forms a bridge to the 30S subunit in the 70S ribosome.

Functionally, this is one of the proteins that bind and probably mediate the attachment of the 5S RNA into the large ribosomal subunit, where it forms part of the central protuberance. In the 70S ribosome it contacts protein S13 of the 30S subunit (bridge B1b), connecting the 2 subunits; this bridge is implicated in subunit movement. Contacts the P site tRNA; the 5S rRNA and some of its associated proteins might help stabilize positioning of ribosome-bound tRNAs. The polypeptide is Large ribosomal subunit protein uL5 (Rickettsia felis (strain ATCC VR-1525 / URRWXCal2) (Rickettsia azadi)).